Reading from the N-terminus, the 444-residue chain is Multidrug resistance protein MdtA (444 aa).

The N-terminal stretch at 1–20 is a signal peptide; it reads MKSQSKRTSRLFVFVGGVVA. Positions 37 to 52 are enriched in polar residues; sequence NNTSGAQQSARGQDTS. Disordered regions lie at residues 37–60 and 398–444; these read NNTSGAQQSARGQDTSHGGRRNTP and TPRS…AEKS. Residues 406–419 show a composition bias toward low complexity; that stretch reads ANPASAEKAAAEAE. Positions 435–444 are enriched in polar residues; it reads ARSTTAAEKS.

This sequence belongs to the membrane fusion protein (MFP) (TC 8.A.1) family. Part of a tripartite efflux system composed of MdtA, MdtB and MdtC.

The protein resides in the cell inner membrane. The chain is Multidrug resistance protein MdtA from Yersinia pseudotuberculosis serotype O:1b (strain IP 31758).